Consider the following 345-residue polypeptide: RDS/peripherin-like protein xRDS36 (345 aa).

Residues 1–24 (MVLFKAKFSFQRRVKLAQTLWLLS) are Cytoplasmic-facing. Residues 25–43 (WLSVLVGCLTFGMGIFLKV) form a helical membrane-spanning segment. Topologically, residues 44-61 (QLWIHNEVMDNTTAHAVP) are lumenal. Residue N54 is glycosylated (N-linked (GlcNAc...) asparagine). Residues 62 to 80 (NTVITAGLVGILLGYFAGK) traverse the membrane as a helical segment. The Cytoplasmic portion of the chain corresponds to 81–99 (ISQASMDLTKYQRWKSFMM). Residues 100–123 (PFFFLAILSCIVCLAALVLSVALR) form a helical membrane-spanning segment. At 124 to 264 (GTLEESLKIG…LGYYTGIMAT (141 aa)) the chain is on the lumenal side. N-linked (GlcNAc...) asparagine glycosylation is present at N229. A helical transmembrane segment spans residues 265 to 290 (NGAAVTLSFLLQASVLVSLRYVQTSM). The Cytoplasmic segment spans residues 291–345 (DKIRDPDDVEADTEGFLLEKGVMETVNSSLEKIKDLFKSNQVETAEGGGEGAAGS).

It belongs to the PRPH2/ROM1 family. Homodimer; disulfide-linked. Rod specific.

The protein localises to the membrane. This chain is RDS/peripherin-like protein xRDS36 (rds36), found in Xenopus laevis (African clawed frog).